We begin with the raw amino-acid sequence, 141 residues long: Large ribosomal subunit protein uL22c (141 aa).

This sequence belongs to the universal ribosomal protein uL22 family. Part of the 50S ribosomal subunit.

It is found in the plastid. The protein localises to the chloroplast. This protein binds specifically to 23S rRNA. Its function is as follows. The globular domain of the protein is located near the polypeptide exit tunnel on the outside of the subunit, while an extended beta-hairpin is found that lines the wall of the exit tunnel in the center of the 70S ribosome. The sequence is that of Large ribosomal subunit protein uL22c (rpl22) from Chloranthus spicatus (Chulantree).